The primary structure comprises 325 residues: MEPTLKNILENPSLKWIFVGGKGGVGKTTTSSSLATLFAKSGKKTIIISTDPAHNLSDCFDQKIGGQPILIKGIDNLSAMEIDPTVDPDKLKLPTLQGFMNDQATKSLLSELISSVPGIDEAMSFAELMNSVDEMKYDLIIFDTAPTGHTLRLLNFPNIMEKGLNKLVQLRYNFQNLASQFQGLFGSQEEFDQQMNQMFSKIETMKDTVTKVNAQMKDKNKTTFIGVCIPEFLSMYETERLVQELTKFKIDIHNIVINQVLFPDDQCKMCNARAKMQKKYLDQMIDLYDDFHVVIMPLQENEVRGIDGLKQFCELLLKPKTVPQV.

Residue lysine 22–threonine 29 participates in ATP binding. Aspartate 51 is an active-site residue. ATP is bound by residues glutamate 231 and asparagine 258. Residues cysteine 267 and cysteine 270 each contribute to the Zn(2+) site.

It belongs to the arsA ATPase family. Homodimer.

Its subcellular location is the cytoplasm. It localises to the endoplasmic reticulum. Its function is as follows. ATPase required for the post-translational delivery of tail-anchored (TA) proteins to the endoplasmic reticulum. Recognizes and selectively binds the transmembrane domain of TA proteins in the cytosol. This complex then targets to the endoplasmic reticulum by membrane-bound receptors, where the tail-anchored protein is released for insertion. This process is regulated by ATP binding and hydrolysis. ATP binding drives the homodimer towards the closed dimer state, facilitating recognition of newly synthesized TA membrane proteins. ATP hydrolysis is required for insertion. Subsequently, the homodimer reverts towards the open dimer state, lowering its affinity for the membrane-bound receptor, and returning it to the cytosol to initiate a new round of targeting. The chain is ATPase ASNA1 homolog 2 from Paramecium tetraurelia.